Consider the following 189-residue polypeptide: UPF0301 protein CCA_00630 (189 aa).

This sequence belongs to the UPF0301 (AlgH) family.

The polypeptide is UPF0301 protein CCA_00630 (Chlamydia caviae (strain ATCC VR-813 / DSM 19441 / 03DC25 / GPIC) (Chlamydophila caviae)).